The chain runs to 482 residues: O-methyltransferase tpcA (482 aa).

Residues 293–294 (GG), Asp-316, 348–349 (SF), and Arg-364 contribute to the S-adenosyl-L-methionine site. Residue His-368 is the Proton acceptor of the active site.

The protein belongs to the class I-like SAM-binding methyltransferase superfamily. Cation-independent O-methyltransferase family. Specifically expressed in conidia.

It participates in secondary metabolite biosynthesis. In terms of biological role, O-methyltransferase; part of the gene cluster that mediates the biosynthesis of trypacidin, a mycotoxin with antiprotozoal activity and that plays a role in the infection process. The pathway begins with the synthesis of atrochrysone thioester by the polyketide synthase (PKS) tpcC. The atrochrysone carboxyl ACP thioesterase tpcB then breaks the thioester bond and releases the atrochrysone carboxylic acid from tpcC. The decarboxylase tpcK converts atrochrysone carboxylic acid to atrochrysone which is further reduced into emodin anthrone. The next step is performed by the emodin anthrone oxygenase tpcL that catalyzes the oxidation of emodinanthrone to emodin. Emodin O-methyltransferase encoded by tpcA catalyzes methylation of the 8-hydroxy group of emodin to form questin. Ring cleavage of questin by questin oxidase tpcI leads to desmethylsulochrin via several intermediates including questin epoxide. Another methylation step catalyzed by tpcM leads to the formation of sulochrin which is further converted to monomethylsulfochrin by tpcH. Finally, the tpcJ catalyzes the conversion of monomethylsulfochrin to trypacidin. Trypacidin is toxic for human pulmonary and bronchial epithelial cells by initiating the intracellular formation of nitric oxide (NO) and hydrogen peroxide (H(2)O(2)), thus triggering host necrotic cell death. The trypacidin pathway is also able to produce endocrocin via a distinct route from the endocrocin Enc pathway. This is O-methyltransferase tpcA from Aspergillus fumigatus (strain ATCC MYA-4609 / CBS 101355 / FGSC A1100 / Af293) (Neosartorya fumigata).